Consider the following 487-residue polypeptide: Protein nucleotidyltransferase YdiU (487 aa).

Residues G90, G92, R93, K113, D125, G126, R176, and R183 each contribute to the ATP site. D252 (proton acceptor) is an active-site residue. Residues N253 and D262 each contribute to the Mg(2+) site. Residue D262 participates in ATP binding.

It belongs to the SELO family. The cofactor is Mg(2+). Mn(2+) is required as a cofactor.

The catalysed reaction is L-seryl-[protein] + ATP = 3-O-(5'-adenylyl)-L-seryl-[protein] + diphosphate. It catalyses the reaction L-threonyl-[protein] + ATP = 3-O-(5'-adenylyl)-L-threonyl-[protein] + diphosphate. The enzyme catalyses L-tyrosyl-[protein] + ATP = O-(5'-adenylyl)-L-tyrosyl-[protein] + diphosphate. It carries out the reaction L-histidyl-[protein] + UTP = N(tele)-(5'-uridylyl)-L-histidyl-[protein] + diphosphate. The catalysed reaction is L-seryl-[protein] + UTP = O-(5'-uridylyl)-L-seryl-[protein] + diphosphate. It catalyses the reaction L-tyrosyl-[protein] + UTP = O-(5'-uridylyl)-L-tyrosyl-[protein] + diphosphate. Nucleotidyltransferase involved in the post-translational modification of proteins. It can catalyze the addition of adenosine monophosphate (AMP) or uridine monophosphate (UMP) to a protein, resulting in modifications known as AMPylation and UMPylation. In Azotobacter vinelandii (strain DJ / ATCC BAA-1303), this protein is Protein nucleotidyltransferase YdiU.